The chain runs to 200 residues: NAD(P)H dehydrogenase (quinone) (200 aa).

The region spanning 4–191 is the Flavodoxin-like domain; that stretch reads LLVLYYSMYG…TIARFQGEHV (188 aa). FMN-binding positions include 10 to 15 and 79 to 81; these read SMYGHV and TRF. Tyr12 is a binding site for NAD(+). Trp99 lines the substrate pocket. FMN contacts are provided by residues 114–120 and His135; that span reads STASQHG.

It belongs to the WrbA family. The cofactor is FMN.

It carries out the reaction a quinone + NADH + H(+) = a quinol + NAD(+). The catalysed reaction is a quinone + NADPH + H(+) = a quinol + NADP(+). The chain is NAD(P)H dehydrogenase (quinone) from Nitrosococcus oceani (strain ATCC 19707 / BCRC 17464 / JCM 30415 / NCIMB 11848 / C-107).